The chain runs to 185 residues: uncharacterized protein (185 aa).

Residues Met-1–Asn-56 constitute a chloroplast transit peptide. Residues Arg-48–Asn-67 form a disordered region. Residues Ser-52–Ser-64 show a composition bias toward polar residues. The stretch at Gln-105 to Gln-138 forms a coiled coil.

The protein localises to the plastid. The protein resides in the chloroplast. Its subcellular location is the plastoglobule. This is an uncharacterized protein from Arabidopsis thaliana (Mouse-ear cress).